Reading from the N-terminus, the 409-residue chain is Na(+)-translocating NADH-quinone reductase subunit F (409 aa).

The chain crosses the membrane as a helical span at residues 5–25 (FIFGIIAFTALVLVLAVIILF). Residues 34–128 (GDITISINND…SMDVELPEEI (95 aa)) form the 2Fe-2S ferredoxin-type domain. [2Fe-2S] cluster contacts are provided by Cys71, Cys77, Cys80, and Cys112. Positions 131-271 (VKKWECTVIS…SGPFGEFFAK (141 aa)) constitute an FAD-binding FR-type domain.

Belongs to the NqrF family. Composed of six subunits; NqrA, NqrB, NqrC, NqrD, NqrE and NqrF. [2Fe-2S] cluster is required as a cofactor. The cofactor is FAD.

It is found in the cell inner membrane. The enzyme catalyses a ubiquinone + n Na(+)(in) + NADH + H(+) = a ubiquinol + n Na(+)(out) + NAD(+). In terms of biological role, NQR complex catalyzes the reduction of ubiquinone-1 to ubiquinol by two successive reactions, coupled with the transport of Na(+) ions from the cytoplasm to the periplasm. The first step is catalyzed by NqrF, which accepts electrons from NADH and reduces ubiquinone-1 to ubisemiquinone by a one-electron transfer pathway. The sequence is that of Na(+)-translocating NADH-quinone reductase subunit F from Actinobacillus pleuropneumoniae serotype 5b (strain L20).